The chain runs to 39 residues: Natriuretic peptide PaNP-d (39 aa).

The propeptide occupies 1-8; sequence SGSKTAEI. Residues 1–39 form a disordered region; the sequence is SGSKTAEIDDGCFGLPLDPIGSTSGMGCRSVPKPIPGGS. Cys-12 and Cys-28 are disulfide-bonded.

It belongs to the natriuretic peptide family. Expressed by the venom gland.

It localises to the secreted. Functionally, snake venom natriuretic peptide that targets both NPR1 and NPR2. Exhibits hypotensive and vasodepressor activities. The chain is Natriuretic peptide PaNP-d from Pseudechis australis (Mulga snake).